The chain runs to 197 residues: Peptidoglycan-recognition protein 1 (197 aa).

The signal sequence occupies residues 1-23 (MKLATITFFLLTEIFFYISYAEA). 2 cysteine pairs are disulfide-bonded: Cys31/Cys154 and Cys68/Cys74. The region spanning 53 to 180 (KPLERVVIHH…RNVKATKSPG (128 aa)) is the N-acetylmuramoyl-L-alanine amidase domain.

It belongs to the N-acetylmuramoyl-L-alanine amidase 2 family. As to expression, localizes to plasma (at protein level).

The protein localises to the secreted. Peptidoglycan-recognition protein probably involved in innate immunity by binding to peptidoglycans (PGN) of bacteria and activating the prophenoloxidase (proPO) cascade immune response. Binds to 1,3-beta-D-glucan and PGN. This Holotrichia diomphalia (Korean black chafer) protein is Peptidoglycan-recognition protein 1 (PGRP-1).